The chain runs to 520 residues: NAD(P)H-quinone oxidoreductase subunit 2 (520 aa).

The next 14 membrane-spanning stretches (helical) occupy residues 15 to 35 (ILPE…DLIL), 42 to 62 (WIGY…YFQW), 79 to 99 (LSII…LMSI), 106 to 126 (GTAL…GMFV), 132 to 152 (LVMI…LTGY), 167 to 187 (LLIG…LYGL), 210 to 230 (LGAV…ISAA), 244 to 264 (PTPV…ALAI), 280 to 300 (FVFT…ALAQ), 306 to 326 (MLAY…IAGT), 334 to 354 (IFYL…IILF), 378 to 398 (LGLS…GFFG), 400 to 420 (IYLF…LGLV), and 466 to 486 (VGLV…NPLF).

The protein belongs to the complex I subunit 2 family. As to quaternary structure, NDH-1 can be composed of about 15 different subunits; different subcomplexes with different compositions have been identified which probably have different functions.

It is found in the cellular thylakoid membrane. It catalyses the reaction a plastoquinone + NADH + (n+1) H(+)(in) = a plastoquinol + NAD(+) + n H(+)(out). The catalysed reaction is a plastoquinone + NADPH + (n+1) H(+)(in) = a plastoquinol + NADP(+) + n H(+)(out). Its function is as follows. NDH-1 shuttles electrons from an unknown electron donor, via FMN and iron-sulfur (Fe-S) centers, to quinones in the respiratory and/or the photosynthetic chain. The immediate electron acceptor for the enzyme in this species is believed to be plastoquinone. Couples the redox reaction to proton translocation, and thus conserves the redox energy in a proton gradient. Cyanobacterial NDH-1 also plays a role in inorganic carbon-concentration. This is NAD(P)H-quinone oxidoreductase subunit 2 from Nostoc sp. (strain PCC 7120 / SAG 25.82 / UTEX 2576).